Here is a 437-residue protein sequence, read N- to C-terminus: MIQSDAYTESAGYLAARPPTLEIFPSWPMSHLQEPYSNSQSVGSTTDSSSAQNTMSQAELVSPASMRSDSGQEQQQQEVLMVTIDDYNYKQGLGAAIATAPSFQQHAGGLDMRKHGSTRKDGKLLDAKTERRLAQNREAARKSRLRKKAYVQQLETSRIRLQQIEQELQRARSQGLFPGGCSAPGDMSSGAVMFDMDYTRWIDDDSKCMAELQGALQAQLPDGNLGAIVEECMRHYDELFHLRAVLASSDVFHLMTGMWAAPAERCFLWMAGFRPSEILKMLIPQLDPLTEQQLMGMCSLQQSSEQTEEALAQGLHQLHQSLADAVGGGPLNDGADVANYTGLMALALGRLENLESFYRQADNLRQETLHHMRRILTTRQTARCFLSIGEYNRRLRALSSLWASRPRENFIATENVSPTGTEFQVIQQSQQNQFSGF.

Residues 33–75 (QEPYSNSQSVGSTTDSSSAQNTMSQAELVSPASMRSDSGQEQQ) are disordered. Over residues 37-50 (SNSQSVGSTTDSSS) the composition is skewed to low complexity. A compositionally biased stretch (polar residues) spans 51-75 (AQNTMSQAELVSPASMRSDSGQEQQ). The region spanning 126 to 170 (DAKTERRLAQNREAARKSRLRKKAYVQQLETSRIRLQQIEQELQR) is the bZIP domain. A basic motif region spans residues 128–148 (KTERRLAQNREAARKSRLRKK). Positions 154-168 (LETSRIRLQQIEQEL) are leucine-zipper. One can recognise a DOG1 domain in the interval 191-405 (AVMFDMDYTR…RALSSLWASR (215 aa)).

The protein belongs to the bZIP family. In terms of assembly, interacts with NPR5/NH4, NH5.1 and NH5.2.

Its subcellular location is the nucleus. Its function is as follows. Transcriptional regulator involved in defense response. The polypeptide is Transcription factor TGAL5 (Oryza sativa subsp. japonica (Rice)).